The chain runs to 555 residues: MSIQTVSFQSFTDQKPGTSGLRKKVKVFQQPNYSESFITSILLSIPEGAKDAFLVIGGDGRYYNPEAIQKIAKISAAYGVKKLLVGQNGILSTPAASNLIRVRKATGGILLTASHNPGGPNADFGIKYNLSNGAPAPETVTNKIYETSKTLTSYNYAEIPELDLSSIGSKTYGPLEVEVVHSTSDYVKMMKEIFDFDLIKEFLNTHKDFKVLFDGMHGVTGPYGVDIFVNELGLPSSSTMNCVPSPDFNGGHPDPNLVYAHELVEAVDKNGIHFGAASDGDGDRNMIYGANTFVSPGDSLAIISHHAKLIPYFQKQGVYGLARSMPTSGAVDLVAKAQGLQSYEVPTGWKFFCNLFDNKKISICGEESFGTGSNHIREKDGLWAIVAWLNIIAGVAKEKPDQTPSIASIQNDFWQAYGRTFFTRYDYENVDSDGANKVIAILSDKVANKDSFVGSTVSGRKVTDVGNFSYTDLDGSVSKNQGLYAKFDDGSRIIVRLSGTGSSGATIRLYIEKYESDKSKFGLTASEYLKDNVALALSLLNFKEFIGREEPDVRT.

Alpha-D-glucose 1,6-bisphosphate is bound by residues Arg-22 and Ser-114. The Phosphoserine intermediate role is filled by Ser-114. Positions 114, 279, 281, and 283 each coordinate Mg(2+). Ser-114 carries the post-translational modification Phosphoserine. Residues Asp-283, Arg-284, Thr-347, Glu-366, Ser-368, and Lys-379 each contribute to the alpha-D-glucose 1,6-bisphosphate site.

The protein belongs to the phosphohexose mutase family. As to quaternary structure, monomer. The cofactor is Mg(2+).

It localises to the cytoplasm. The enzyme catalyses alpha-D-glucose 1-phosphate = alpha-D-glucose 6-phosphate. It catalyses the reaction O-phospho-L-seryl-[protein] + alpha-D-glucose 1-phosphate = alpha-D-glucose 1,6-bisphosphate + L-seryl-[protein]. It carries out the reaction alpha-D-glucose 1,6-bisphosphate + L-seryl-[protein] = O-phospho-L-seryl-[protein] + alpha-D-glucose 6-phosphate. Catalyzes the reversible isomerization of alpha-D-glucose 1-phosphate to alpha-D-glucose 6-phosphate. The mechanism proceeds via the intermediate compound alpha-D-glucose 1,6-bisphosphate. Key enzyme in hexose metabolism. The reverse reaction is an essential step for biosynthesis because glucose 1-phosphate is the starting point for the synthesis of UDP-glucose, which acts as a precursor for the synthesis of oligosaccharides and trehalose. The chain is Phosphoglucomutase (pgmA) from Aspergillus oryzae (strain ATCC 42149 / RIB 40) (Yellow koji mold).